The chain runs to 355 residues: Protein RecA (355 aa).

74–81 is a binding site for ATP; that stretch reads GPESSGKT.

It belongs to the RecA family.

The protein localises to the cytoplasm. In terms of biological role, can catalyze the hydrolysis of ATP in the presence of single-stranded DNA, the ATP-dependent uptake of single-stranded DNA by duplex DNA, and the ATP-dependent hybridization of homologous single-stranded DNAs. It interacts with LexA causing its activation and leading to its autocatalytic cleavage. The protein is Protein RecA of Cytophaga hutchinsonii (strain ATCC 33406 / DSM 1761 / CIP 103989 / NBRC 15051 / NCIMB 9469 / D465).